Reading from the N-terminus, the 167-residue chain is Acetolactate synthase small subunit (167 aa).

One can recognise an ACT domain in the interval 7-81 (TLSVLVEAKP…NVIKIVELED (75 aa)).

Belongs to the acetolactate synthase small subunit family. Dimer of large and small chains.

The catalysed reaction is 2 pyruvate + H(+) = (2S)-2-acetolactate + CO2. The protein operates within amino-acid biosynthesis; L-isoleucine biosynthesis; L-isoleucine from 2-oxobutanoate: step 1/4. Its pathway is amino-acid biosynthesis; L-valine biosynthesis; L-valine from pyruvate: step 1/4. This Mycobacterium avium protein is Acetolactate synthase small subunit (ilvH).